The chain runs to 229 residues: Large ribosomal subunit protein uL1 (229 aa).

It belongs to the universal ribosomal protein uL1 family. As to quaternary structure, part of the 50S ribosomal subunit.

Its function is as follows. Binds directly to 23S rRNA. The L1 stalk is quite mobile in the ribosome, and is involved in E site tRNA release. Functionally, protein L1 is also a translational repressor protein, it controls the translation of the L11 operon by binding to its mRNA. This Staphylococcus aureus (strain MRSA252) protein is Large ribosomal subunit protein uL1.